Here is a 98-residue protein sequence, read N- to C-terminus: Large ribosomal subunit protein uL23 (98 aa).

Belongs to the universal ribosomal protein uL23 family. Part of the 50S ribosomal subunit. Contacts protein L29, and trigger factor when it is bound to the ribosome.

In terms of biological role, one of the early assembly proteins it binds 23S rRNA. One of the proteins that surrounds the polypeptide exit tunnel on the outside of the ribosome. Forms the main docking site for trigger factor binding to the ribosome. The protein is Large ribosomal subunit protein uL23 of Saccharophagus degradans (strain 2-40 / ATCC 43961 / DSM 17024).